Consider the following 202-residue polypeptide: Transcription antitermination protein NusB (202 aa).

A compositionally biased stretch (basic and acidic residues) spans 1–11 (MTEERTADNKA). 2 disordered regions span residues 1–21 (MTEERTADNKAAKAASFKRHG) and 169–202 (SAAKRAEQAEQPGQAESDELDGLLDGVVQESDEA).

Belongs to the NusB family.

Functionally, involved in transcription antitermination. Required for transcription of ribosomal RNA (rRNA) genes. Binds specifically to the boxA antiterminator sequence of the ribosomal RNA (rrn) operons. The chain is Transcription antitermination protein NusB from Corynebacterium jeikeium (strain K411).